A 227-amino-acid chain; its full sequence is DNA repair protein RecO (227 aa).

It belongs to the RecO family.

Functionally, involved in DNA repair and RecF pathway recombination. The sequence is that of DNA repair protein RecO from Pseudomonas putida (strain ATCC 47054 / DSM 6125 / CFBP 8728 / NCIMB 11950 / KT2440).